The chain runs to 168 residues: Protein GRIM REAPER (168 aa).

The first 30 residues, 1 to 30 (MVIKIPNTFIKATSLLSLILYFLIIATSKS), serve as a signal peptide directing secretion. The N-linked (GlcNAc...) asparagine glycan is linked to Asn59.

It belongs to the STIG1 family. As to quaternary structure, interacts with PRK5 and to a lower extent with PRK4. In terms of tissue distribution, highly expressed in flowers, and at very low levels in leaves.

The protein localises to the secreted. Its subcellular location is the extracellular space. It localises to the apoplast. Its function is as follows. Involved in the regulation of cell death induced by extracellular reactive oxygen species. Only the processed peptide, and not the full length GRI can bind in vivo to the extracellular domain of the receptor PRK5. The GRIp-induced cell death is superoxide and salicylic acid dependent. The chain is Protein GRIM REAPER from Arabidopsis thaliana (Mouse-ear cress).